A 433-amino-acid polypeptide reads, in one-letter code: GTPase Obg (433 aa).

The Obg domain occupies 1–158 (MFVDQVKIYV…RNVILELKLL (158 aa)). In terms of domain architecture, OBG-type G spans 159 to 329 (ADVGLVGFPS…LLFAIADLLE (171 aa)). GTP contacts are provided by residues 165–172 (GFPSVGKS), 190–194 (FTTLV), 212–215 (DLPG), 282–285 (NKMD), and 310–312 (SAA). 2 residues coordinate Mg(2+): serine 172 and threonine 192. In terms of domain architecture, OCT spans 350–428 (KYEKEELPFT…LLDYEFEFVD (79 aa)).

Belongs to the TRAFAC class OBG-HflX-like GTPase superfamily. OBG GTPase family. As to quaternary structure, monomer. Mg(2+) serves as cofactor.

The protein resides in the cytoplasm. In terms of biological role, an essential GTPase which binds GTP, GDP and possibly (p)ppGpp with moderate affinity, with high nucleotide exchange rates and a fairly low GTP hydrolysis rate. Plays a role in control of the cell cycle, stress response, ribosome biogenesis and in those bacteria that undergo differentiation, in morphogenesis control. This is GTPase Obg from Geobacillus thermodenitrificans (strain NG80-2).